The sequence spans 489 residues: Amino acid transporter AVT6E (489 aa).

11 consecutive transmembrane segments (helical) span residues 76–96 (GIYGAVFNLTTSIIGAGIMAL), 102–122 (VLGLVLGFVLIILMALLSEIS), 156–176 (ICIIVNNGGVLVVYLIIMGDV), 201–221 (VLILIVMVIFLAPLCALNKID), 227–247 (SAASVALAVVFVVVCFVVATI), 269–289 (ILDLLVVIPIMSNAYVCHFNV), 310–330 (ITTAICVVVYASTAVSGYLLF), 357–377 (IVRIGYILHLVLVFPVIHFSL), 404–424 (VVLLALIYIGSTMIPNIWTAF), 425–445 (KFTGATSAVSLGFTFPALIAL), and 461–481 (VSWLMLILAVVVSIVGTIGNI).

The protein belongs to the amino acid/polyamine transporter 2 family. Amino acid/auxin permease (AAAP) (TC 2.A.18.6) subfamily.

It is found in the endoplasmic reticulum membrane. The protein resides in the vacuole membrane. The sequence is that of Amino acid transporter AVT6E from Arabidopsis thaliana (Mouse-ear cress).